The primary structure comprises 628 residues: Phosphomethylpyrimidine synthase (628 aa).

Substrate is bound by residues Asn229, Met258, Tyr287, His323, 343–345 (SRG), 384–387 (DGLR), and Glu423. His427 contacts Zn(2+). Tyr450 contributes to the substrate binding site. Residue His491 participates in Zn(2+) binding. [4Fe-4S] cluster is bound by residues Cys571, Cys574, and Cys579.

The protein belongs to the ThiC family. As to quaternary structure, homodimer. The cofactor is [4Fe-4S] cluster.

The enzyme catalyses 5-amino-1-(5-phospho-beta-D-ribosyl)imidazole + S-adenosyl-L-methionine = 4-amino-2-methyl-5-(phosphooxymethyl)pyrimidine + CO + 5'-deoxyadenosine + formate + L-methionine + 3 H(+). It participates in cofactor biosynthesis; thiamine diphosphate biosynthesis. Catalyzes the synthesis of the hydroxymethylpyrimidine phosphate (HMP-P) moiety of thiamine from aminoimidazole ribotide (AIR) in a radical S-adenosyl-L-methionine (SAM)-dependent reaction. This is Phosphomethylpyrimidine synthase from Variovorax paradoxus (strain S110).